A 654-amino-acid chain; its full sequence is Heat shock 70 kDa protein 2 (654 aa).

Gly residues predominate over residues 612-646 (AGGEGGAPGAGFPGAGGPGGFPGAGAGGAHSGGDD). The disordered stretch occupies residues 612–654 (AGGEGGAPGAGFPGAGGPGGFPGAGAGGAHSGGDDGPTVEEVD).

This sequence belongs to the heat shock protein 70 family.

The protein is Heat shock 70 kDa protein 2 (HSP70-2) of Paracoccidioides lutzii (strain ATCC MYA-826 / Pb01) (Paracoccidioides brasiliensis).